Reading from the N-terminus, the 1060-residue chain is Carbamoyl phosphate synthase large chain (1060 aa).

The carboxyphosphate synthetic domain stretch occupies residues 1 to 401; the sequence is MPKRTDIRKI…SLLKACRSLE (401 aa). Residues Arg-129, Arg-169, Gly-175, Gly-176, Arg-208, Ile-210, Glu-215, Gly-241, Ile-242, His-243, Gln-284, and Glu-298 each coordinate ATP. The ATP-grasp 1 domain occupies 133–327; the sequence is KQLMEELNQP…IAKLAAKIAV (195 aa). The Mg(2+) site is built by Gln-284, Glu-298, and Asn-300. Residues Gln-284, Glu-298, and Asn-300 each coordinate Mn(2+). An oligomerization domain region spans residues 402-546; that stretch reads IGVDHIKIAD…YSTYAVENES (145 aa). The interval 547–929 is carbamoyl phosphate synthetic domain; that stretch reads LISDKASILV…ALYKAFEAAY (383 aa). The ATP-grasp 2 domain maps to 671-861; that stretch reads EATLQALNIP…MAQVATKVIL (191 aa). ATP-binding residues include Arg-707, Ala-746, Leu-748, Glu-752, Gly-777, Val-778, His-779, Ser-780, Gln-820, and Glu-832. Mg(2+)-binding residues include Gln-820, Glu-832, and Asn-834. Mn(2+)-binding residues include Gln-820, Glu-832, and Asn-834. The region spanning 930 to 1060 is the MGS-like domain; that stretch reads LHMPDYGNIV…SRAFTLKVLD (131 aa). The interval 930–1060 is allosteric domain; that stretch reads LHMPDYGNIV…SRAFTLKVLD (131 aa).

Belongs to the CarB family. As to quaternary structure, composed of two chains; the small (or glutamine) chain promotes the hydrolysis of glutamine to ammonia, which is used by the large (or ammonia) chain to synthesize carbamoyl phosphate. Tetramer of heterodimers (alpha,beta)4. Mg(2+) serves as cofactor. It depends on Mn(2+) as a cofactor.

It catalyses the reaction hydrogencarbonate + L-glutamine + 2 ATP + H2O = carbamoyl phosphate + L-glutamate + 2 ADP + phosphate + 2 H(+). It carries out the reaction hydrogencarbonate + NH4(+) + 2 ATP = carbamoyl phosphate + 2 ADP + phosphate + 2 H(+). The protein operates within amino-acid biosynthesis; L-arginine biosynthesis; carbamoyl phosphate from bicarbonate: step 1/1. Its pathway is pyrimidine metabolism; UMP biosynthesis via de novo pathway; (S)-dihydroorotate from bicarbonate: step 1/3. Its function is as follows. Large subunit of the glutamine-dependent carbamoyl phosphate synthetase (CPSase). CPSase catalyzes the formation of carbamoyl phosphate from the ammonia moiety of glutamine, carbonate, and phosphate donated by ATP, constituting the first step of 2 biosynthetic pathways, one leading to arginine and/or urea and the other to pyrimidine nucleotides. The large subunit (synthetase) binds the substrates ammonia (free or transferred from glutamine from the small subunit), hydrogencarbonate and ATP and carries out an ATP-coupled ligase reaction, activating hydrogencarbonate by forming carboxy phosphate which reacts with ammonia to form carbamoyl phosphate. This is Carbamoyl phosphate synthase large chain from Streptococcus agalactiae serotype Ia (strain ATCC 27591 / A909 / CDC SS700).